The sequence spans 683 residues: WD repeat-containing protein 48 homolog (683 aa).

WD repeat units lie at residues 27 to 82 (SNRS…PVQY), 88 to 130 (QHTD…FIDC), 133 to 167 (THKDYVSCLAYAPIVEKAVSASFDHNIFVYDINAN), 176 to 215 (GCKDSIYSLATTPNLSLVLGAGTEKCIRLFDPRTNEKIMK), 218 to 257 (GHTDNVRALVVNDDGTRALSAGSDATIRLWDIGQQRCIAT), 260 to 299 (AHEEGVWTLQVDSSFTTVYSAGKDKMVVKTPLYDFTKSQL), and 302 to 343 (KEEA…QLSI). The disordered stretch occupies residues 341–364 (LSIGGDEDGPSTSNANHSVSASSS). Positions 351–364 (STSNANHSVSASSS) are enriched in low complexity. A WD 8 repeat occupies 389–428 (PGAPAIKKHAMLSDKRHVLTRDSDGNVALYDVLAARKIKD).

This sequence belongs to the WD repeat WDR48 family. In terms of assembly, interacts with usp-46; the interaction increases the catalytic activity of usp-46 in the presence of wdr-20. As to expression, expressed in several head neurons and cells in the tail including the anal depressor cell.

In terms of biological role, together with wdr-20, binds to and stimulates the activity of the deubiquitinating enzyme usp-46, leading to deubiquitination and stabilization of the glr-1 glutamate receptor. This Caenorhabditis elegans protein is WD repeat-containing protein 48 homolog (wdr-48).